The sequence spans 185 residues: Peptidyl-tRNA hydrolase (185 aa).

Tyr-14 lines the tRNA pocket. Residue His-19 is the Proton acceptor of the active site. The tRNA site is built by Phe-64, Asn-66, and Asn-112.

Belongs to the PTH family. In terms of assembly, monomer.

It is found in the cytoplasm. The catalysed reaction is an N-acyl-L-alpha-aminoacyl-tRNA + H2O = an N-acyl-L-amino acid + a tRNA + H(+). Its function is as follows. Hydrolyzes ribosome-free peptidyl-tRNAs (with 1 or more amino acids incorporated), which drop off the ribosome during protein synthesis, or as a result of ribosome stalling. Functionally, catalyzes the release of premature peptidyl moieties from peptidyl-tRNA molecules trapped in stalled 50S ribosomal subunits, and thus maintains levels of free tRNAs and 50S ribosomes. The protein is Peptidyl-tRNA hydrolase of Alkaliphilus oremlandii (strain OhILAs) (Clostridium oremlandii (strain OhILAs)).